Reading from the N-terminus, the 307-residue chain is Thioredoxin reductase (307 aa).

An FAD-binding site is contributed by 34-41; sequence ESKAHGGQ. C134 and C137 are disulfide-bonded. FAD is bound at residue 275-284; the sequence is DVRAKSFRQV.

This sequence belongs to the class-II pyridine nucleotide-disulfide oxidoreductase family. As to quaternary structure, homodimer. Requires FAD as cofactor.

It localises to the cytoplasm. It carries out the reaction [thioredoxin]-dithiol + NADP(+) = [thioredoxin]-disulfide + NADPH + H(+). This chain is Thioredoxin reductase (trxB), found in Treponema pallidum (strain Nichols).